Consider the following 117-residue polypeptide: Ig heavy chain V region 5-76 (117 aa).

A signal peptide spans 1-19 (MNFVLSLIFLALILKGVQC). The framework-1 stretch occupies residues 20–49 (EVHLVESGGGLVKPGGSLKLSCVVSGFTFN). Cysteines 41 and 115 form a disulfide. The tract at residues 50 to 54 (KYAMS) is complementarity-determining-1. Residues 55–68 (WVRQTPEKRLEWVA) are framework-2. The interval 69-85 (TISSGGLYTYYPDSVKG) is complementarity-determining-2. Residues 86–117 (RFTISRDNAGNTLYLQMSSLRSEDTAMYYCAR) form a framework-3 region.

The chain is Ig heavy chain V region 5-76 from Mus musculus (Mouse).